A 144-amino-acid polypeptide reads, in one-letter code: FK506-binding protein 2 (144 aa).

The first 20 residues, 1 to 20, serve as a signal peptide directing secretion; the sequence is MARIIVLIVAFMALIAGVFA. Positions 48–136 constitute a PPIase FKBP-type domain; the sequence is GDTVSVHYTG…IFTTELVSID (89 aa). Residues 141 to 144 carry the Prevents secretion from ER motif; sequence RDEL.

The protein belongs to the FKBP-type PPIase family. FKBP2 subfamily.

The protein localises to the endoplasmic reticulum. The catalysed reaction is [protein]-peptidylproline (omega=180) = [protein]-peptidylproline (omega=0). With respect to regulation, inhibited by both FK506 and rapamycin. In terms of biological role, PPIases accelerate the folding of proteins. It catalyzes the cis-trans isomerization of proline imidic peptide bonds in oligopeptides. This Yarrowia lipolytica (strain CLIB 122 / E 150) (Yeast) protein is FK506-binding protein 2 (FPR2).